The primary structure comprises 606 residues: Gamma-aminobutyric acid receptor subunit beta (606 aa).

A signal peptide spans 1-44 (MSDSKMDKLARMAPLPRTPLLTIWLAINMALIAQETGHKRIHTV). The Extracellular segment spans residues 45 to 268 (QAATGGGSML…CEIQFVRSMG (224 aa)). Asn58 carries an N-linked (GlcNAc...) asparagine glycan. An intrachain disulfide couples Cys185 to Cys199. Asn253 is a glycosylation site (N-linked (GlcNAc...) asparagine). 3 helical membrane-spanning segments follow: residues 269–291 (YYLI…SFWL), 297–316 (PARV…LMSS), and 333–356 (YLGT…YMAK). Residues 357 to 568 (RIQMRKQRFM…LGITPSDIDK (212 aa)) are Cytoplasmic-facing. 2 disordered regions span residues 376–451 (KQQL…VSNR) and 482–542 (HDPK…AAVP). Low complexity predominate over residues 381 to 395 (GANQQQANPNPNANV). A compositionally biased stretch (gly residues) spans 396–425 (GGPGGVGVGPGGPGGPGGGVNVGVGMGMGP). Residues 430–443 (GHGHHAHSHGHPHA) are compositionally biased toward basic residues. Residues 499-536 (GGRGGPQSHGPGPGQGGGPPGGGGGGGGGGGPPEGGGD) are compositionally biased toward gly residues. A helical transmembrane segment spans residues 569 to 590 (YSRIVFPVCFVCFNLMYWIIYL).

The protein belongs to the ligand-gated ion channel (TC 1.A.9) family. Gamma-aminobutyric acid receptor (TC 1.A.9.5) subfamily.

It is found in the postsynaptic cell membrane. It localises to the cell membrane. In terms of biological role, GABA, an inhibitory neurotransmitter, mediates neuronal inhibition by binding to the GABA receptor and opening an integral chloride channel. This Drosophila simulans (Fruit fly) protein is Gamma-aminobutyric acid receptor subunit beta (Rdl).